The primary structure comprises 103 residues: Large ribosomal subunit protein uL23c (103 aa).

The protein belongs to the universal ribosomal protein uL23 family. Part of the 50S ribosomal subunit.

The protein localises to the plastid. It is found in the chloroplast. Its function is as follows. Binds to 23S rRNA. This chain is Large ribosomal subunit protein uL23c (rpl23), found in Gracilaria tenuistipitata var. liui (Red alga).